The sequence spans 941 residues: Glycine dehydrogenase (decarboxylating) (941 aa).

Residue Lys692 is modified to N6-(pyridoxal phosphate)lysine.

This sequence belongs to the GcvP family. In terms of assembly, the glycine cleavage system is composed of four proteins: P, T, L and H. Pyridoxal 5'-phosphate is required as a cofactor.

It catalyses the reaction N(6)-[(R)-lipoyl]-L-lysyl-[glycine-cleavage complex H protein] + glycine + H(+) = N(6)-[(R)-S(8)-aminomethyldihydrolipoyl]-L-lysyl-[glycine-cleavage complex H protein] + CO2. Functionally, the glycine cleavage system catalyzes the degradation of glycine. The P protein binds the alpha-amino group of glycine through its pyridoxal phosphate cofactor; CO(2) is released and the remaining methylamine moiety is then transferred to the lipoamide cofactor of the H protein. In Mycobacterium bovis (strain ATCC BAA-935 / AF2122/97), this protein is Glycine dehydrogenase (decarboxylating).